Reading from the N-terminus, the 150-residue chain is Keratin-associated protein 15-1 (150 aa).

It belongs to the PMG family. In terms of assembly, interacts with hair keratins. In terms of tissue distribution, expressed at high levels in skin and at lower levels in the developing mammary gland.

Functionally, in the hair cortex, hair keratin intermediate filaments are embedded in an interfilamentous matrix, consisting of hair keratin-associated proteins (KRTAP), which are essential for the formation of a rigid and resistant hair shaft through their extensive disulfide bond cross-linking with abundant cysteine residues of hair keratins. The matrix proteins include the high-sulfur and high-glycine-tyrosine keratins. This Mus musculus (Mouse) protein is Keratin-associated protein 15-1.